We begin with the raw amino-acid sequence, 467 residues long: MPTSDPGLRRVTVHAGAQAVDLTLPAAVPVATLIPSIVDILGDRGASPATAARYQLSALGAPALPNATTLAQCGIRDGAVLVLHKSSAQPPTPRCDDVAEAVAAALDTTARPQCQRTTRLSGALAASCITAGGGLMLVRNALGTNVTRYSDATAGVVAAAGLAALLFAVIACRTYRDPIAGLTLSVIATIFGAVAGLLAVPGVPGVHSVLVAAMAAAATSVLAMRITGCGGITLTAVACCAVVVAAATLVGAITAAPVPAIGSLATLASFGLLEVSARMAVLLAGLSPRLPPALNPDDADALPTTDRLTTRANRADAWLTSLLAAFAASATIGAIGTAVATHGIHRSSMGGIALAAVTGALLLLRARSADTRRSLVFAICGITTVATAFTVAADRALEHGPWIAALTAMLAAVAMFLGFVAPALSLSPVTYRTIELLECLALIAMVPLTAWLCGAYSAVRHLDLTWT.

Helical transmembrane passes span 122–142 (GALA…RNAL), 152–172 (ATAG…VIAC), 186–206 (VIAT…VPGV), 209–229 (VLVA…ITGC), 241–261 (AVVV…VPAI), 264–284 (LATL…VLLA), 319–339 (LTSL…GTAV), 344–364 (IHRS…LLLL), 374–394 (SLVF…VAAD), 401–421 (PWIA…GFVA), and 439–459 (CLAL…YSAV).

This sequence belongs to the EccD/Snm4 family. In terms of assembly, part of the ESX-4 / type VII secretion system (T7SS), which is composed of cytosolic and membrane components.

It is found in the cell membrane. This chain is ESX-4 secretion system protein eccD4 (eccD4), found in Mycobacterium tuberculosis (strain CDC 1551 / Oshkosh).